Reading from the N-terminus, the 482-residue chain is Probable cytochrome P450 508D1 (482 aa).

Residues 1 to 21 (MVYLKNILIFLIIFLINPLVK) traverse the membrane as a helical segment. Cys428 provides a ligand contact to heme.

This sequence belongs to the cytochrome P450 family. The cofactor is heme.

The protein resides in the membrane. The protein is Probable cytochrome P450 508D1 (cyp508D1) of Dictyostelium discoideum (Social amoeba).